The primary structure comprises 217 residues: NADH-quinone oxidoreductase subunit I (217 aa).

Positions 22–41 (TTEQYPEEKKETAPRFHGRH) are disordered. 2 4Fe-4S ferredoxin-type domains span residues 43–73 (LNRH…VEGA) and 89–118 (RVYQ…MSND). [4Fe-4S] cluster contacts are provided by Cys53, Cys56, Cys59, Cys63, Cys98, Cys101, Cys104, and Cys108. The interval 193–217 (ARRTAGEHSRADEVPAHGAGSERPR) is disordered.

This sequence belongs to the complex I 23 kDa subunit family. NDH-1 is composed of 14 different subunits. Subunits NuoA, H, J, K, L, M, N constitute the membrane sector of the complex. It depends on [4Fe-4S] cluster as a cofactor.

The protein resides in the cell membrane. It carries out the reaction a quinone + NADH + 5 H(+)(in) = a quinol + NAD(+) + 4 H(+)(out). In terms of biological role, NDH-1 shuttles electrons from NADH, via FMN and iron-sulfur (Fe-S) centers, to quinones in the respiratory chain. The immediate electron acceptor for the enzyme in this species is believed to be ubiquinone. Couples the redox reaction to proton translocation (for every two electrons transferred, four hydrogen ions are translocated across the cytoplasmic membrane), and thus conserves the redox energy in a proton gradient. This is NADH-quinone oxidoreductase subunit I from Frankia casuarinae (strain DSM 45818 / CECT 9043 / HFP020203 / CcI3).